Reading from the N-terminus, the 379-residue chain is Zinc metalloproteinase nas-20 (379 aa).

The first 20 residues, 1 to 20 (MKITVNFLLVALIGVPSVLS), serve as a signal peptide directing secretion. Positions 21 to 29 (DRHITRDKR) are excised as a propeptide. One can recognise a Peptidase M12A domain in the interval 30–208 (QAMRDYAKWE…VLLNKFYGCN (179 aa)). Residue N67 is glycosylated (N-linked (GlcNAc...) asparagine). Cystine bridges form between C70–C207, C91–C111, C209–C229, and C234–C243. H119 lines the Zn(2+) pocket. E120 is a catalytic residue. Zn(2+) is bound by residues H123 and H129. A glycan (N-linked (GlcNAc...) asparagine) is linked at N185. Positions 203–244 (KFYGCNCDNHPRKLDCKNGGYQNPANCEECLCTDGFNGQLCD) constitute an EGF-like domain. 2 N-linked (GlcNAc...) asparagine glycosylation sites follow: N337 and N370.

The cofactor is Zn(2+).

The protein localises to the secreted. Functionally, metalloprotease. In Caenorhabditis elegans, this protein is Zinc metalloproteinase nas-20 (nas-20).